The following is a 208-amino-acid chain: MKVTAAFAGLLATTLAAPATELVTRSINYVQNYNGNLGAFSYNEGAGTFSMYWQQGVSNDFVVGLGRSTGSSNPITYSASYSASGGSYLAVYGWVNSPQAEYHVVEAYGNYNPCSSGSATNLGTVSSDGGTYQVCTDTRVNQPSITGTSTFTQFFSVRQGSRTSGTVTIANHFNFWAKHGFGNSNFNYQVVAVEAWSGTGTASVTVSA.

Residues 1–16 (MKVTAAFAGLLATTLA) form the signal peptide. The GH11 domain occupies 17 to 207 (APATELVTRS…GTGTASVTVS (191 aa)). Catalysis depends on glutamate 101, which acts as the Nucleophile. Glutamate 194 (proton donor) is an active-site residue.

It belongs to the glycosyl hydrolase 11 (cellulase G) family.

It is found in the secreted. It carries out the reaction Endohydrolysis of (1-&gt;4)-beta-D-xylosidic linkages in xylans.. It participates in glycan degradation; xylan degradation. Its activity is regulated as follows. N-bromosuccinimide completely inhibits the catalytic activity. Endo-1,4-beta-xylanase involved in the hydrolysis of xylan, a major structural heterogeneous polysaccharide found in plant biomass representing the second most abundant polysaccharide in the biosphere, after cellulose. The sequence is that of Endo-1,4-beta-xylanase B (xynB) from Talaromyces purpureogenus (Soft rot fungus).